The sequence spans 438 residues: Serine--tRNA ligase (438 aa).

245–247 (TSE) lines the L-serine pocket. 276–278 (RSE) contacts ATP. Position 299 (E299) interacts with L-serine. 363-366 (EISS) is an ATP binding site. S398 provides a ligand contact to L-serine.

Belongs to the class-II aminoacyl-tRNA synthetase family. Type-1 seryl-tRNA synthetase subfamily. Homodimer. The tRNA molecule binds across the dimer.

Its subcellular location is the cytoplasm. The enzyme catalyses tRNA(Ser) + L-serine + ATP = L-seryl-tRNA(Ser) + AMP + diphosphate + H(+). It carries out the reaction tRNA(Sec) + L-serine + ATP = L-seryl-tRNA(Sec) + AMP + diphosphate + H(+). Its pathway is aminoacyl-tRNA biosynthesis; selenocysteinyl-tRNA(Sec) biosynthesis; L-seryl-tRNA(Sec) from L-serine and tRNA(Sec): step 1/1. Catalyzes the attachment of serine to tRNA(Ser). Is also able to aminoacylate tRNA(Sec) with serine, to form the misacylated tRNA L-seryl-tRNA(Sec), which will be further converted into selenocysteinyl-tRNA(Sec). This Verminephrobacter eiseniae (strain EF01-2) protein is Serine--tRNA ligase.